Here is a 586-residue protein sequence, read N- to C-terminus: Adenine deaminase (586 aa).

It belongs to the metallo-dependent hydrolases superfamily. Adenine deaminase family. Requires Mn(2+) as cofactor.

The enzyme catalyses adenine + H2O + H(+) = hypoxanthine + NH4(+). The sequence is that of Adenine deaminase from Bdellovibrio bacteriovorus (strain ATCC 15356 / DSM 50701 / NCIMB 9529 / HD100).